The sequence spans 151 residues: Macrodomain Ter protein (151 aa).

The protein belongs to the MatP family. Homodimer.

The protein resides in the cytoplasm. Required for spatial organization of the terminus region of the chromosome (Ter macrodomain) during the cell cycle. Prevents early segregation of duplicated Ter macrodomains during cell division. Binds specifically to matS, which is a 13 bp signature motif repeated within the Ter macrodomain. This is Macrodomain Ter protein from Yersinia pseudotuberculosis serotype IB (strain PB1/+).